The primary structure comprises 140 residues: Nucleoside diphosphate kinase (140 aa).

Residues lysine 11, phenylalanine 59, arginine 87, threonine 93, arginine 104, and asparagine 114 each coordinate ATP. The Pros-phosphohistidine intermediate role is filled by histidine 117.

The protein belongs to the NDK family. Homotetramer. Requires Mg(2+) as cofactor.

Its subcellular location is the cytoplasm. The enzyme catalyses a 2'-deoxyribonucleoside 5'-diphosphate + ATP = a 2'-deoxyribonucleoside 5'-triphosphate + ADP. The catalysed reaction is a ribonucleoside 5'-diphosphate + ATP = a ribonucleoside 5'-triphosphate + ADP. Functionally, major role in the synthesis of nucleoside triphosphates other than ATP. The ATP gamma phosphate is transferred to the NDP beta phosphate via a ping-pong mechanism, using a phosphorylated active-site intermediate. In Francisella tularensis subsp. tularensis (strain SCHU S4 / Schu 4), this protein is Nucleoside diphosphate kinase.